The following is a 122-amino-acid chain: Large ribosomal subunit protein bL12 (122 aa).

The protein belongs to the bacterial ribosomal protein bL12 family. As to quaternary structure, homodimer. Part of the ribosomal stalk of the 50S ribosomal subunit. Forms a multimeric L10(L12)X complex, where L10 forms an elongated spine to which 2 to 4 L12 dimers bind in a sequential fashion. Binds GTP-bound translation factors.

Forms part of the ribosomal stalk which helps the ribosome interact with GTP-bound translation factors. Is thus essential for accurate translation. This is Large ribosomal subunit protein bL12 from Enterococcus faecalis (strain ATCC 700802 / V583).